Reading from the N-terminus, the 316-residue chain is Aspartate-semialdehyde dehydrogenase (316 aa).

Residues 13–16 (TGAV) and 41–42 (RS) each bind NADP(+). Arg-101 serves as a coordination point for phosphate. Catalysis depends on Cys-132, which acts as the Acyl-thioester intermediate. Gln-159 is a binding site for substrate. Residue 162-163 (SG) coordinates NADP(+). Lys-216 contacts phosphate. Arg-238 is a binding site for substrate. Residue His-245 is the Proton acceptor of the active site. Asn-316 contributes to the NADP(+) binding site.

The protein belongs to the aspartate-semialdehyde dehydrogenase family. As to quaternary structure, homodimer.

The enzyme catalyses L-aspartate 4-semialdehyde + phosphate + NADP(+) = 4-phospho-L-aspartate + NADPH + H(+). The protein operates within amino-acid biosynthesis; L-lysine biosynthesis via DAP pathway; (S)-tetrahydrodipicolinate from L-aspartate: step 2/4. It functions in the pathway amino-acid biosynthesis; L-methionine biosynthesis via de novo pathway; L-homoserine from L-aspartate: step 2/3. Its pathway is amino-acid biosynthesis; L-threonine biosynthesis; L-threonine from L-aspartate: step 2/5. Functionally, catalyzes the NADPH-dependent formation of L-aspartate-semialdehyde (L-ASA) by the reductive dephosphorylation of L-aspartyl-4-phosphate. The chain is Aspartate-semialdehyde dehydrogenase (asd) from Vibrio mimicus.